The chain runs to 671 residues: DNA ligase (671 aa).

NAD(+)-binding positions include 32-36 (DAEYD), 81-82 (SL), and Glu-113. Lys-115 serves as the catalytic N6-AMP-lysine intermediate. NAD(+) is bound by residues Arg-136, Glu-173, Lys-290, and Lys-314. Zn(2+) is bound by residues Cys-408, Cys-411, Cys-426, and Cys-432. In terms of domain architecture, BRCT spans 593-671 (EIDSPFAGKT…EAEMIRLLGA (79 aa)).

The protein belongs to the NAD-dependent DNA ligase family. LigA subfamily. Mg(2+) is required as a cofactor. It depends on Mn(2+) as a cofactor.

It carries out the reaction NAD(+) + (deoxyribonucleotide)n-3'-hydroxyl + 5'-phospho-(deoxyribonucleotide)m = (deoxyribonucleotide)n+m + AMP + beta-nicotinamide D-nucleotide.. DNA ligase that catalyzes the formation of phosphodiester linkages between 5'-phosphoryl and 3'-hydroxyl groups in double-stranded DNA using NAD as a coenzyme and as the energy source for the reaction. It is essential for DNA replication and repair of damaged DNA. The chain is DNA ligase from Salmonella heidelberg (strain SL476).